A 573-amino-acid chain; its full sequence is Plasmepsin X (573 aa).

The first 26 residues, Met-1–Cys-26, serve as a signal peptide directing secretion. A propeptide spanning residues Thr-27–Leu-221 is cleaved from the precursor. Intrachain disulfides connect Cys-39–Cys-51 and Cys-42–Cys-48. A disordered region spans residues Lys-167–Asn-211. Positions Asn-183–Leu-203 are enriched in acidic residues. A Peptidase A1 domain is found at Phe-248–Ala-567. Asp-266 is an active-site residue. Cys-279 and Cys-284 are oxidised to a cystine. Asn-334 carries N-linked (GlcNAc...) asparagine glycosylation. Residues Cys-447 and Cys-448 are joined by a disulfide bond. Asp-457 is an active-site residue. Cysteines 482 and 521 form a disulfide.

This sequence belongs to the peptidase A1 family. In terms of processing, autocleaved into a p16 prodomain form and two mature forms p44 and p51.

It localises to the cytoplasmic vesicle. Its subcellular location is the secretory vesicle. Its activity is regulated as follows. Inhibited by aminohydantoin compounds such as CWHM-117. Its function is as follows. During the asexual blood stage, processes key proteins essential for merozoite egress and invasion of host erythrocytes. Cleaves and activates proteases SUB1 and SUB2. May process members of the EBL and Rh protein families. Also cleaves apical membrane protein AMA1. During the mosquito vector stage and probably in ookinetes, cleaves CelTOS. The protein is Plasmepsin X of Plasmodium falciparum (isolate NF54).